A 696-amino-acid chain; its full sequence is DEAD-box ATP-dependent RNA helicase 7 (696 aa).

The segment at 1–116 (MPSLPVAAAE…GDEDPADPNA (116 aa)) is disordered. A coiled-coil region spans residues 16 to 97 (ESASKKSKRK…KVVVEEEEED (82 aa)). Residues 27 to 38 (KAAEVEVEASSR) show a composition bias toward basic and acidic residues. Positions 39–49 (KKEKKEKKRKA) are enriched in basic residues. Low complexity predominate over residues 67–77 (STSSDEPAPAA). Acidic residues predominate over residues 92–112 (EEEEEDDDEGELTASGDEDPA). Residues 115–143 (NALANFRISESLREKLKSKGIKALFPIQA) carry the Q motif motif. A Helicase ATP-binding domain is found at 146-328 (FDLVLDGHDL…LRFLKSGKKT (183 aa)). An ATP-binding site is contributed by 159–166 (ARTGQGKT). The DEAD box motif lies at 274–277 (DEAD). In terms of domain architecture, Helicase C-terminal spans 357–500 (QVIPDIIRCY…ISAPQPTDVA (144 aa)). Residues 641 to 696 (LPPLQEREQSGGSRGGGRFGNRRFSGGGGGRGGGGRGFGGGRGRGGGGGNRFNKRY) are disordered. Residues 652 to 690 (GSRGGGRFGNRRFSGGGGGRGGGGRGFGGGRGRGGGGGN) are compositionally biased toward gly residues.

Belongs to the DEAD box helicase family. DDX21/DDX50 subfamily.

The protein localises to the nucleus. The enzyme catalyses ATP + H2O = ADP + phosphate + H(+). The sequence is that of DEAD-box ATP-dependent RNA helicase 7 from Oryza sativa subsp. japonica (Rice).